A 435-amino-acid polypeptide reads, in one-letter code: Histidinol dehydrogenase (435 aa).

Residues Y131, Q189, and N212 each coordinate NAD(+). Residues S238, Q260, and H263 each coordinate substrate. Residues Q260 and H263 each contribute to the Zn(2+) site. Catalysis depends on proton acceptor residues E327 and H328. The substrate site is built by H328, D361, E415, and H420. D361 is a binding site for Zn(2+). Position 420 (H420) interacts with Zn(2+).

This sequence belongs to the histidinol dehydrogenase family. As to quaternary structure, homodimer. Zn(2+) is required as a cofactor.

It catalyses the reaction L-histidinol + 2 NAD(+) + H2O = L-histidine + 2 NADH + 3 H(+). The protein operates within amino-acid biosynthesis; L-histidine biosynthesis; L-histidine from 5-phospho-alpha-D-ribose 1-diphosphate: step 9/9. In terms of biological role, catalyzes the sequential NAD-dependent oxidations of L-histidinol to L-histidinaldehyde and then to L-histidine. This Buchnera aphidicola subsp. Acyrthosiphon pisum (strain APS) (Acyrthosiphon pisum symbiotic bacterium) protein is Histidinol dehydrogenase (hisD).